A 309-amino-acid chain; its full sequence is Extracellular agarase (309 aa).

Residues 1-30 constitute a signal peptide (tat-type signal); sequence MVNRRDLIKWSAVALGAGAGLAGPAPAAHA. A GH16 domain is found at 33–309; it reads LEWEQYPVPA…YRWVRTYQAV (277 aa). The active-site Nucleophile is the Glu-155. Glu-160 functions as the Proton donor in the catalytic mechanism.

This sequence belongs to the glycosyl hydrolase 16 family. In terms of processing, predicted to be exported by the Tat system. The position of the signal peptide cleavage has been experimentally proven.

The protein resides in the secreted. The catalysed reaction is Hydrolysis of (1-&gt;4)-beta-D-galactosidic linkages in agarose, giving the tetramer as the predominant product.. The protein is Extracellular agarase (dagA) of Streptomyces coelicolor (strain ATCC BAA-471 / A3(2) / M145).